The following is a 274-amino-acid chain: Type III pantothenate kinase (274 aa).

6 to 13 is an ATP binding site; the sequence is DVRNTHTV. Position 109–112 (109–112) interacts with substrate; the sequence is GADR. The active-site Proton acceptor is aspartate 111. Aspartate 131 contributes to the K(+) binding site. Serine 134 is an ATP binding site. Threonine 186 contacts substrate.

It belongs to the type III pantothenate kinase family. Homodimer. NH4(+) is required as a cofactor. Requires K(+) as cofactor.

The protein resides in the cytoplasm. It catalyses the reaction (R)-pantothenate + ATP = (R)-4'-phosphopantothenate + ADP + H(+). It participates in cofactor biosynthesis; coenzyme A biosynthesis; CoA from (R)-pantothenate: step 1/5. Functionally, catalyzes the phosphorylation of pantothenate (Pan), the first step in CoA biosynthesis. This chain is Type III pantothenate kinase, found in Mycobacterium leprae (strain Br4923).